Reading from the N-terminus, the 138-residue chain is Transcription antitermination protein NusB (138 aa).

Belongs to the NusB family.

Functionally, involved in transcription antitermination. Required for transcription of ribosomal RNA (rRNA) genes. Binds specifically to the boxA antiterminator sequence of the ribosomal RNA (rrn) operons. This chain is Transcription antitermination protein NusB, found in Colwellia psychrerythraea (strain 34H / ATCC BAA-681) (Vibrio psychroerythus).